The chain runs to 426 residues: MDLQVEKINKISGVIKAPASKSYSHRAFIAAALAEGQSILRDPLYSADTIATLEACEQLGALFQRYPDKCIVQGTAGYIRTPENIIDVKNSGTSVRILSSVAAIAPRANYTIFTGDESLRKRPMQDLIDALENLGVQISSSQSNGTPPIIVKGGFEGGQTDIKGDVSSQFISSIIMAAPYSKKPVTLNVKGTFVSKPYVNMTLSVISKFGIDFEYDTTNIPEYSSYYIEPQKYEATDYTIEGDYSSASYILAAAAMLPSNLTVKNLYKDSMQGDKIIIDIIKKMGAEVTVDDDQIHIESDGNLKAFDINLEDAPDLLPTISILMAQAEGVSKITGVEHARFKETDRVHNCAVELENVGVDVEELQDGLIIKGNPTGGYVDSHMDHRMVMAFYVLGLKIGNIIIKDASCYDISFPNFLEVMHTISEE.

3-phosphoshikimate-binding residues include lysine 21, serine 22, and arginine 26. Lysine 21 provides a ligand contact to phosphoenolpyruvate. Phosphoenolpyruvate contacts are provided by glycine 92 and arginine 122. 3-phosphoshikimate-binding residues include serine 167, serine 168, glutamine 169, serine 195, aspartate 315, and lysine 342. Residue glutamine 169 coordinates phosphoenolpyruvate. Residue aspartate 315 is the Proton acceptor of the active site. Arginine 346 and arginine 386 together coordinate phosphoenolpyruvate.

The protein belongs to the EPSP synthase family. Monomer.

Its subcellular location is the cytoplasm. It catalyses the reaction 3-phosphoshikimate + phosphoenolpyruvate = 5-O-(1-carboxyvinyl)-3-phosphoshikimate + phosphate. It participates in metabolic intermediate biosynthesis; chorismate biosynthesis. Functionally, catalyzes the transfer of the enolpyruvyl moiety of phosphoenolpyruvate (PEP) to the 5-hydroxyl of shikimate-3-phosphate (S3P) to produce enolpyruvyl shikimate-3-phosphate and inorganic phosphate. The chain is 3-phosphoshikimate 1-carboxyvinyltransferase from Methanosphaera stadtmanae (strain ATCC 43021 / DSM 3091 / JCM 11832 / MCB-3).